The chain runs to 261 residues: MTHQTHAYHMVNPSPWPLTGALSALLMTSGLAMWFHYNSMLLLTLGLMTNLLTMYQWWRDIVRESTFQGHHTLVVQKGLRYGMILFIISEVFFFSGFFWAFYHSSLAPTPELGGCWPPTGIHPLNPMEVPLLNTSVLLASGVSITWAHHSLMEGNRKHMLQALFITISLGVYFTLLQASEYYEAPFTISDGIYGSTFFVATGFHGLHVIIGSTFLIVCFLRQLKFHFTSNHHFGFEAAAWYWHFVDVVWLFLYVSIYWWGS.

The Mitochondrial matrix portion of the chain corresponds to 1–15 (MTHQTHAYHMVNPSP). The chain crosses the membrane as a helical span at residues 16-34 (WPLTGALSALLMTSGLAMW). Over 35–40 (FHYNSM) the chain is Mitochondrial intermembrane. Residues 41–66 (LLLTLGLMTNLLTMYQWWRDIVREST) traverse the membrane as a helical segment. The Mitochondrial matrix portion of the chain corresponds to 67 to 72 (FQGHHT). Residues 73–105 (LVVQKGLRYGMILFIISEVFFFSGFFWAFYHSS) traverse the membrane as a helical segment. At 106-128 (LAPTPELGGCWPPTGIHPLNPME) the chain is on the mitochondrial intermembrane side. A helical transmembrane segment spans residues 129–152 (VPLLNTSVLLASGVSITWAHHSLM). Topologically, residues 153-155 (EGN) are mitochondrial matrix. Residues 156–183 (RKHMLQALFITISLGVYFTLLQASEYYE) traverse the membrane as a helical segment. Residues 184–190 (APFTISD) are Mitochondrial intermembrane-facing. Residues 191-223 (GIYGSTFFVATGFHGLHVIIGSTFLIVCFLRQL) traverse the membrane as a helical segment. Residues 224-232 (KFHFTSNHH) are Mitochondrial matrix-facing. A helical membrane pass occupies residues 233-256 (FGFEAAAWYWHFVDVVWLFLYVSI). Over 257 to 261 (YWWGS) the chain is Mitochondrial intermembrane.

It belongs to the cytochrome c oxidase subunit 3 family. As to quaternary structure, component of the cytochrome c oxidase (complex IV, CIV), a multisubunit enzyme composed of 14 subunits. The complex is composed of a catalytic core of 3 subunits MT-CO1, MT-CO2 and MT-CO3, encoded in the mitochondrial DNA, and 11 supernumerary subunits COX4I, COX5A, COX5B, COX6A, COX6B, COX6C, COX7A, COX7B, COX7C, COX8 and NDUFA4, which are encoded in the nuclear genome. The complex exists as a monomer or a dimer and forms supercomplexes (SCs) in the inner mitochondrial membrane with NADH-ubiquinone oxidoreductase (complex I, CI) and ubiquinol-cytochrome c oxidoreductase (cytochrome b-c1 complex, complex III, CIII), resulting in different assemblies (supercomplex SCI(1)III(2)IV(1) and megacomplex MCI(2)III(2)IV(2)).

The protein resides in the mitochondrion inner membrane. The catalysed reaction is 4 Fe(II)-[cytochrome c] + O2 + 8 H(+)(in) = 4 Fe(III)-[cytochrome c] + 2 H2O + 4 H(+)(out). Functionally, component of the cytochrome c oxidase, the last enzyme in the mitochondrial electron transport chain which drives oxidative phosphorylation. The respiratory chain contains 3 multisubunit complexes succinate dehydrogenase (complex II, CII), ubiquinol-cytochrome c oxidoreductase (cytochrome b-c1 complex, complex III, CIII) and cytochrome c oxidase (complex IV, CIV), that cooperate to transfer electrons derived from NADH and succinate to molecular oxygen, creating an electrochemical gradient over the inner membrane that drives transmembrane transport and the ATP synthase. Cytochrome c oxidase is the component of the respiratory chain that catalyzes the reduction of oxygen to water. Electrons originating from reduced cytochrome c in the intermembrane space (IMS) are transferred via the dinuclear copper A center (CU(A)) of subunit 2 and heme A of subunit 1 to the active site in subunit 1, a binuclear center (BNC) formed by heme A3 and copper B (CU(B)). The BNC reduces molecular oxygen to 2 water molecules using 4 electrons from cytochrome c in the IMS and 4 protons from the mitochondrial matrix. This is Cytochrome c oxidase subunit 3 (MT-CO3) from Ceratotherium simum (White rhinoceros).